Consider the following 56-residue polypeptide: Protein translocase subunit SecE (56 aa).

Residues 30–50 form a helical membrane-spanning segment; the sequence is VFWLVLFVSIFLGIVDYLMFL.

The protein belongs to the SecE/SEC61-gamma family. In terms of assembly, component of the Sec protein translocase complex. Heterotrimer consisting of SecY, SecE and SecG subunits. The heterotrimers can form oligomers, although 1 heterotrimer is thought to be able to translocate proteins. Interacts with the ribosome. Interacts with SecDF, and other proteins may be involved. Interacts with SecA.

The protein localises to the cell inner membrane. Essential subunit of the Sec protein translocation channel SecYEG. Clamps together the 2 halves of SecY. May contact the channel plug during translocation. The protein is Protein translocase subunit SecE of Borreliella burgdorferi (strain ATCC 35210 / DSM 4680 / CIP 102532 / B31) (Borrelia burgdorferi).